The following is a 695-amino-acid chain: Putative ATP-dependent RNA helicase L540 (695 aa).

The Helicase ATP-binding domain occupies 53–219 (LSALENYQLV…FNSVDSTVID (167 aa)). 66–73 (SSTGSGKS) contacts ATP. The DEAH box motif lies at 164 to 167 (DEAH). In terms of domain architecture, Helicase C-terminal spans 247-434 (LIEDLIHQQI…GINMMNQLMD (188 aa)).

This sequence belongs to the DEAD box helicase family. DEAH subfamily.

It is found in the virion. The enzyme catalyses ATP + H2O = ADP + phosphate + H(+). The chain is Putative ATP-dependent RNA helicase L540 from Acanthamoeba polyphaga (Amoeba).